A 376-amino-acid chain; its full sequence is MKHNIIELAQQLIRNPSISPQDKGCQQIISQRLAAVGFTLEWMPFGDTLNLWATHGNGDPCIVFAGHTDIVPTGDPAQWQYPPFSAIIVDEMLHGRGAADMKGSLAALVIAAENFVRKYPNHSGKIALLITSDEEATAKDGTAKVVETLMARHEKIDYAVIGEPSCSKYLGDIIKNGRRGSITAELYIEGVQGHVAYPHLAQNPIHTSLAFLNELTTYQWDNGNTFFPPTSLQIANIKAGTGNNNVIPGELYLQFNLRYCTEINDQIIKQTVATMLAKYGLQYRIHWHLSGKPFLSSEGKLVNATIQAVENITKHTPRLDTSGGTSDGRFIALMGAEVVEFGPLNATIHKVNECVSTEDLAKCGQIYYQILEQLLT.

His-67 provides a ligand contact to Zn(2+). The active site involves Asp-69. Asp-100 provides a ligand contact to Zn(2+). Glu-134 functions as the Proton acceptor in the catalytic mechanism. The Zn(2+) site is built by Glu-135, Glu-163, and His-349.

The protein belongs to the peptidase M20A family. DapE subfamily. Homodimer. The cofactor is Zn(2+). Co(2+) is required as a cofactor.

The catalysed reaction is N-succinyl-(2S,6S)-2,6-diaminopimelate + H2O = (2S,6S)-2,6-diaminopimelate + succinate. It participates in amino-acid biosynthesis; L-lysine biosynthesis via DAP pathway; LL-2,6-diaminopimelate from (S)-tetrahydrodipicolinate (succinylase route): step 3/3. In terms of biological role, catalyzes the hydrolysis of N-succinyl-L,L-diaminopimelic acid (SDAP), forming succinate and LL-2,6-diaminopimelate (DAP), an intermediate involved in the bacterial biosynthesis of lysine and meso-diaminopimelic acid, an essential component of bacterial cell walls. The chain is Succinyl-diaminopimelate desuccinylase from Haemophilus ducreyi (strain 35000HP / ATCC 700724).